Reading from the N-terminus, the 201-residue chain is 3-isopropylmalate dehydratase small subunit (201 aa).

It belongs to the LeuD family. LeuD type 1 subfamily. Heterodimer of LeuC and LeuD.

The enzyme catalyses (2R,3S)-3-isopropylmalate = (2S)-2-isopropylmalate. Its pathway is amino-acid biosynthesis; L-leucine biosynthesis; L-leucine from 3-methyl-2-oxobutanoate: step 2/4. In terms of biological role, catalyzes the isomerization between 2-isopropylmalate and 3-isopropylmalate, via the formation of 2-isopropylmaleate. The polypeptide is 3-isopropylmalate dehydratase small subunit (Brucella anthropi (strain ATCC 49188 / DSM 6882 / CCUG 24695 / JCM 21032 / LMG 3331 / NBRC 15819 / NCTC 12168 / Alc 37) (Ochrobactrum anthropi)).